The following is a 156-amino-acid chain: Small ribosomal subunit protein uS7 (156 aa).

It belongs to the universal ribosomal protein uS7 family. In terms of assembly, part of the 30S ribosomal subunit. Contacts proteins S9 and S11.

One of the primary rRNA binding proteins, it binds directly to 16S rRNA where it nucleates assembly of the head domain of the 30S subunit. Is located at the subunit interface close to the decoding center, probably blocks exit of the E-site tRNA. The protein is Small ribosomal subunit protein uS7 of Acinetobacter baylyi (strain ATCC 33305 / BD413 / ADP1).